Here is a 262-residue protein sequence, read N- to C-terminus: Type III pantothenate kinase (262 aa).

9–16 (DIGNTNVK) is an ATP binding site. Residues Y103 and 110–113 (GADR) contribute to the substrate site. D112 (proton acceptor) is an active-site residue. D134 contacts K(+). An ATP-binding site is contributed by T137. Substrate is bound at residue T190.

This sequence belongs to the type III pantothenate kinase family. In terms of assembly, homodimer. NH4(+) serves as cofactor. Requires K(+) as cofactor.

Its subcellular location is the cytoplasm. It catalyses the reaction (R)-pantothenate + ATP = (R)-4'-phosphopantothenate + ADP + H(+). It participates in cofactor biosynthesis; coenzyme A biosynthesis; CoA from (R)-pantothenate: step 1/5. In terms of biological role, catalyzes the phosphorylation of pantothenate (Pan), the first step in CoA biosynthesis. In Nitratidesulfovibrio vulgaris (strain ATCC 29579 / DSM 644 / CCUG 34227 / NCIMB 8303 / VKM B-1760 / Hildenborough) (Desulfovibrio vulgaris), this protein is Type III pantothenate kinase.